We begin with the raw amino-acid sequence, 227 residues long: Lipoprotein-releasing system ATP-binding protein LolD (227 aa).

Positions 6-227 (LKCENINKFY…MQDGLLKEGA (222 aa)) constitute an ABC transporter domain. 42 to 49 (GSSGSGKS) is a binding site for ATP.

This sequence belongs to the ABC transporter superfamily. Lipoprotein translocase (TC 3.A.1.125) family. The complex is composed of two ATP-binding proteins (LolD) and two transmembrane proteins (LolC and LolE).

The protein resides in the cell inner membrane. Functionally, part of the ABC transporter complex LolCDE involved in the translocation of mature outer membrane-directed lipoproteins, from the inner membrane to the periplasmic chaperone, LolA. Responsible for the formation of the LolA-lipoprotein complex in an ATP-dependent manner. The polypeptide is Lipoprotein-releasing system ATP-binding protein LolD (Haemophilus influenzae (strain 86-028NP)).